Here is a 498-residue protein sequence, read N- to C-terminus: Lysine--tRNA ligase (498 aa).

Mg(2+) contacts are provided by Glu-407 and Glu-414.

The protein belongs to the class-II aminoacyl-tRNA synthetase family. In terms of assembly, homodimer. Mg(2+) serves as cofactor.

It localises to the cytoplasm. The enzyme catalyses tRNA(Lys) + L-lysine + ATP = L-lysyl-tRNA(Lys) + AMP + diphosphate. The polypeptide is Lysine--tRNA ligase (Rhizobium etli (strain ATCC 51251 / DSM 11541 / JCM 21823 / NBRC 15573 / CFN 42)).